Here is a 454-residue protein sequence, read N- to C-terminus: Replicative DNA helicase DnaC (454 aa).

The 267-residue stretch at 179-445 (RKGDITGIPT…NKFVNLERRF (267 aa)) folds into the SF4 helicase domain. 210 to 217 (ARPSVGKT) contributes to the ATP binding site.

The protein belongs to the helicase family. DnaB subfamily. In terms of assembly, the DNA replisome assembles sequentially on oriC in this order; DnaA, DnaD, DnaB, DnaI-DnaC helicase. Monomer in the absence of ATP, in its presence forms a probable homohexamer which is not active as a helicase in vitro. Interacts separately and simultaneously with helicase loaders DnaB and DnaI. Interaction with DnaB does not require ATP. Interaction with DnaI requires ATP, probably forms a DnaC(6):DnaI(6) complex, which is not active as a helicase.

Its subcellular location is the cytoplasm. The protein localises to the nucleoid. The catalysed reaction is Couples ATP hydrolysis with the unwinding of duplex DNA at the replication fork by translocating in the 5'-3' direction. This creates two antiparallel DNA single strands (ssDNA). The leading ssDNA polymer is the template for DNA polymerase III holoenzyme which synthesizes a continuous strand.. The enzyme catalyses ATP + H2O = ADP + phosphate + H(+). In terms of biological role, the main replicative DNA helicase, it participates in initiation and elongation during chromosome replication. Travels ahead of the DNA replisome, separating dsDNA into templates for DNA synthesis. The monomer has helicase activity in the presence of DnaI which is further increased by DnaB; the purified oligomeric form (probably a DnaC hexamer) does not have helicase activity in vitro, nor does the DnaC(6):DnaI(6) complex. The direction was not determined but is probably 5'-3'. Helicase activity requires an rNTP and is inactive with dNTPs. Has weak ATPase activity as a monomer, as an oligomer has ATPase activity which is stimulated by single-stranded (ss)DNA and further stimulated by DnaI and more by DnaB. Deletion of a single T residue in the promoter region (a run of 8 Ts becomes 7 Ts) decreases the helicase levels by 50%, decreasing DNA replication inititation during fast growth in rich medium. Suppresses the synthetic lethality of a dnaA1-yabA deletion for growth on rich medium. This chain is Replicative DNA helicase DnaC, found in Bacillus subtilis (strain 168).